The following is a 124-amino-acid chain: MKKEQFYPLGIFLAAMLGGLVRYLVSTWLPASPDFPWGTLFVNYLGIFCLIFLVKGYLVYKGTSKGLILALGTGFCGGLTTFSSLMLDTVKLLDTGRYFSLVLYLLLSIGGGLLLAYFLGRKKW.

4 consecutive transmembrane segments (helical) span residues 9-29 (LGIF…STWL), 34-54 (DFPW…IFLV), 67-87 (LILA…SLML), and 99-119 (FSLV…AYFL). 2 residues coordinate Na(+): Gly77 and Thr80.

Belongs to the fluoride channel Fluc/FEX (TC 1.A.43) family.

Its subcellular location is the cell membrane. The enzyme catalyses fluoride(in) = fluoride(out). Its activity is regulated as follows. Na(+) is not transported, but it plays an essential structural role and its presence is essential for fluoride channel function. Functionally, fluoride-specific ion channel. Important for reducing fluoride concentration in the cell, thus reducing its toxicity. The polypeptide is Fluoride-specific ion channel FluC 2 (Streptococcus pneumoniae (strain ATCC BAA-255 / R6)).